The sequence spans 551 residues: Probable NADH-ubiquinone oxidoreductase C947.15c, mitochondrial (551 aa).

The transit peptide at 1-35 directs the protein to the mitochondrion; that stretch reads MSVSKARLQSVVRLSRTVPYSKTMVRSFHVSCAVK. 92 to 122 is an FAD binding site; that stretch reads NIVVLGSGWGAVAAIKNLDPSLYNITLVSPR. 255–291 provides a ligand contact to NAD(+); the sequence is LHITVVGGGPTGMEFAAEMQDFIDNDVKDMFPELQKD.

This sequence belongs to the NADH dehydrogenase family.

Its subcellular location is the mitochondrion. The enzyme catalyses a quinone + NADH + H(+) = a quinol + NAD(+). The catalysed reaction is a ubiquinone + NADH + H(+) = a ubiquinol + NAD(+). Its function is as follows. Catalyzes the oxidation of NADH. This is Probable NADH-ubiquinone oxidoreductase C947.15c, mitochondrial from Schizosaccharomyces pombe (strain 972 / ATCC 24843) (Fission yeast).